We begin with the raw amino-acid sequence, 168 residues long: Putative adenylate kinase (168 aa).

ATP is bound by residues Gly-10, Gly-12, Lys-13, Thr-14, and Thr-15. The tract at residues 28–51 is NMP; it reads HLNERIREEGLDAGRDEERDSLVA. Positions 97–107 are LID; that stretch reads DRGEPAAKAAE. Arg-98 is a binding site for ATP.

The protein belongs to the adenylate kinase family. AK6 subfamily. Interacts with uS11. Not a structural component of 40S pre-ribosomes, but transiently interacts with them by binding to uS11.

It carries out the reaction AMP + ATP = 2 ADP. The enzyme catalyses ATP + H2O = ADP + phosphate + H(+). Its function is as follows. Broad-specificity nucleoside monophosphate (NMP) kinase that catalyzes the reversible transfer of the terminal phosphate group between nucleoside triphosphates and monophosphates. Also has ATPase activity. Involved in the late maturation steps of the 30S ribosomal particles, specifically 16S rRNA maturation. While NMP activity is not required for ribosome maturation, ATPase activity is. Associates transiently with small ribosomal subunit protein uS11. ATP hydrolysis breaks the interaction with uS11. May temporarily remove uS11 from the ribosome to enable a conformational change of the ribosomal RNA that is needed for the final maturation step of the small ribosomal subunit. The polypeptide is Putative adenylate kinase (Natronomonas pharaonis (strain ATCC 35678 / DSM 2160 / CIP 103997 / JCM 8858 / NBRC 14720 / NCIMB 2260 / Gabara) (Halobacterium pharaonis)).